The sequence spans 314 residues: Oxidoreductase NAD-binding domain-containing protein 1 (314 aa).

The signal sequence occupies residues 1–18; sequence MALVAGSAAYQVLRGVTG. The FAD-binding FR-type domain occupies 63–166; sequence EIISPAKVCG…VGGEFCFDPQ (104 aa). 180 to 185 is an NAD(+) binding site; the sequence is GVGINP.

This chain is Oxidoreductase NAD-binding domain-containing protein 1 (oxnad1), found in Xenopus laevis (African clawed frog).